A 373-amino-acid polypeptide reads, in one-letter code: MTRSGDEAQLMTGVTGDLAGTELGLTPSLTKNAGVPTTDQPQKGKDFTSDQEVRWCPGCGDYVILNTIRNFLPELGLRRENIVFISGIGCSSRFPYYLETYGFHSIHGRAPAIATGLALAREDLSVWVVTGDGDALSIGGNHLIHALRRNINVTILLFNNRIYGLTKGQYSPTSEVGKVTKSTPMGSLDHPFNPVSLALGAEATFVGRALDSDRNGLTEVLRAAAQHRGAALVEILQDCPIFNDGSFDALRKEGAEERVIKVRHGEPIVFGANGEYCVVKSGFGLEVAKTADVAIDEIIVHDAQVDDPAYAFALSRLSDQNLDHTVLGIFRHISRPTYDDAARSQVVAARNAAPSGTAALQSLLHGRDTWTVD.

The disordered stretch occupies residues 26 to 50; the sequence is TPSLTKNAGVPTTDQPQKGKDFTSD. A compositionally biased stretch (polar residues) spans 27 to 41; that stretch reads PSLTKNAGVPTTDQP.

As to quaternary structure, KG oxidoreductase (KOR) is composed of KorA and KorB subunits. Mg(2+) serves as cofactor.

The enzyme catalyses 2 oxidized [2Fe-2S]-[ferredoxin] + 2-oxoglutarate + CoA = succinyl-CoA + 2 reduced [2Fe-2S]-[ferredoxin] + CO2 + H(+). Its pathway is carbohydrate metabolism; tricarboxylic acid cycle. In terms of biological role, component of KG oxidoreductase (KOR) that catalyzes the CoA-dependent oxidative decarboxylation of 2-oxoglutarate (alpha-ketoglutarate, KG) to succinyl-CoA. Methyl viologen can act as electron acceptor in vitro; the physiologic electron acceptor is unknown. Is involved in the alternative TCA pathway that functions concurrently with fatty acid beta-oxidation. Since a growing body of evidence indicates that lipids (for example cholesterol and fatty acids) are a predominant growth substrate for M.tuberculosis during infection, flux through KOR likely represents an important step in intermediary metabolism in vivo. KOR-dependent decarboxylation of KG also appears to be an important source of CO(2) in M.tuberculosis metabolism. This is 2-oxoglutarate oxidoreductase subunit KorB (korB) from Mycobacterium tuberculosis (strain ATCC 25618 / H37Rv).